The chain runs to 500 residues: Probable cytosol aminopeptidase 1 (500 aa).

Lys263 and Asp268 together coordinate Mn(2+). Lys275 is an active-site residue. The Mn(2+) site is built by Asp287, Asp346, and Glu348. The active site involves Arg350.

This sequence belongs to the peptidase M17 family. It depends on Mn(2+) as a cofactor.

Its subcellular location is the cytoplasm. It carries out the reaction Release of an N-terminal amino acid, Xaa-|-Yaa-, in which Xaa is preferably Leu, but may be other amino acids including Pro although not Arg or Lys, and Yaa may be Pro. Amino acid amides and methyl esters are also readily hydrolyzed, but rates on arylamides are exceedingly low.. It catalyses the reaction Release of an N-terminal amino acid, preferentially leucine, but not glutamic or aspartic acids.. Presumably involved in the processing and regular turnover of intracellular proteins. Catalyzes the removal of unsubstituted N-terminal amino acids from various peptides. This Shewanella oneidensis (strain ATCC 700550 / JCM 31522 / CIP 106686 / LMG 19005 / NCIMB 14063 / MR-1) protein is Probable cytosol aminopeptidase 1 (pepA1).